We begin with the raw amino-acid sequence, 103 residues long: Large ribosomal subunit protein uL24 (103 aa).

The protein belongs to the universal ribosomal protein uL24 family. Part of the 50S ribosomal subunit.

Its function is as follows. One of two assembly initiator proteins, it binds directly to the 5'-end of the 23S rRNA, where it nucleates assembly of the 50S subunit. One of the proteins that surrounds the polypeptide exit tunnel on the outside of the subunit. The polypeptide is Large ribosomal subunit protein uL24 (Rhizobium meliloti (strain 1021) (Ensifer meliloti)).